A 169-amino-acid polypeptide reads, in one-letter code: Allophycocyanin subunit beta-18 (169 aa).

Asn-72 carries the N4-methylasparagine modification. Cys-82 contacts (2R,3E)-phycocyanobilin.

This sequence belongs to the phycobiliprotein family. Heterodimer of ApcE and this beta chain. Post-translationally, contains one covalently linked bilin chromophore.

The protein localises to the cellular thylakoid membrane. In terms of biological role, a variant beta-allophycocyanin (AP) which forms a complex with ApcE, a phycobilisome terminal emitter that influences energy transfer to photosystem II. The sequence is that of Allophycocyanin subunit beta-18 (apcF) from Synechocystis sp. (strain ATCC 27184 / PCC 6803 / Kazusa).